The primary structure comprises 310 residues: ER-derived vesicles protein ERV29 (310 aa).

The Cytoplasmic segment spans residues 1–108 (MSYRGPIGNF…YLNKWKHYPY (108 aa)). Residues 11 to 31 (GGMPMSSSQGPYSGGAQFRSN) form a disordered region. Residues 109–129 (FFVVVFLVVVTVSMLIGASLL) traverse the membrane as a helical segment. Residues 130–137 (VLRKQTNY) lie on the Lumenal side of the membrane. The chain crosses the membrane as a helical span at residues 138–158 (ATGVLCACVISQALVYGLFTG). Over 159–209 (SSFVLRNFSVIGGLLIAFSDSIVQNKTTFGMLPELNSKNDKAKGYLLFAGR) the chain is Cytoplasmic. A helical transmembrane segment spans residues 210 to 230 (ILIVLMFIAFTFSKSWFTVVL). Residues 231 to 245 (TIIGTICFAIGYKTK) lie on the Lumenal side of the membrane. Residues 246–266 (FASIMLGLILTFYNITLNNYW) form a helical membrane-spanning segment. Residues 267–310 (FYNNTKRDFLKYEFYQNLSIIGGLLLVTNTGAGELSVDEKKKIY) are Cytoplasmic-facing. The Di-lysine motif motif lies at 307 to 310 (KKIY).

Belongs to the SURF4 family.

The protein resides in the endoplasmic reticulum membrane. Its function is as follows. Constituent of COPII-coated endoplasmic reticulum-derived transport vesicles. Required for efficient transport of a subset of secretory proteins to the Golgi. The C-terminal di-lysine motif is required for exit from the endoplasmic reticulum. Required directly for packaging glycosylated pro-alpha-factor into COPII vesicles. Facilitates retrograde transport from the Golgi to the endoplasmic reticulum. The sequence is that of ER-derived vesicles protein ERV29 (ERV29) from Saccharomyces cerevisiae (strain ATCC 204508 / S288c) (Baker's yeast).